We begin with the raw amino-acid sequence, 347 residues long: Dihydroorotase (347 aa).

Zn(2+)-binding residues include His-14 and His-16. Residues 16-18 and Asn-42 each bind substrate; that span reads HLR. The Zn(2+) site is built by Lys-100, His-137, and His-175. Lys-100 carries the N6-carboxylysine modification. His-137 lines the substrate pocket. Leu-220 provides a ligand contact to substrate. Asp-248 serves as a coordination point for Zn(2+). Residue Asp-248 is part of the active site. His-252 and Ala-264 together coordinate substrate.

The protein belongs to the metallo-dependent hydrolases superfamily. DHOase family. Class II DHOase subfamily. In terms of assembly, homodimer. Zn(2+) is required as a cofactor.

The catalysed reaction is (S)-dihydroorotate + H2O = N-carbamoyl-L-aspartate + H(+). It functions in the pathway pyrimidine metabolism; UMP biosynthesis via de novo pathway; (S)-dihydroorotate from bicarbonate: step 3/3. Catalyzes the reversible cyclization of carbamoyl aspartate to dihydroorotate. This is Dihydroorotase from Jannaschia sp. (strain CCS1).